The sequence spans 497 residues: Long chain base biosynthesis protein 2c (497 aa).

Residues 4-24 (VPFVTAVTTVFSYGVIFGFGH) traverse the membrane as a helical segment. Lysine 319 carries the N6-(pyridoxal phosphate)lysine modification.

The protein belongs to the class-II pyridoxal-phosphate-dependent aminotransferase family. Heterodimer with LCB1. Component of the serine palmitoyltransferase (SPT) complex, composed of LCB1 and LCB2. Pyridoxal 5'-phosphate is required as a cofactor.

The protein localises to the endoplasmic reticulum membrane. The catalysed reaction is L-serine + hexadecanoyl-CoA + H(+) = 3-oxosphinganine + CO2 + CoA. It participates in lipid metabolism; sphingolipid metabolism. Serine palmitoyltransferase (SPT). The heterodimer formed with LCB1 constitutes the catalytic core. The sequence is that of Long chain base biosynthesis protein 2c from Oryza sativa subsp. japonica (Rice).